The chain runs to 298 residues: Probable endonuclease 4 (298 aa).

Zn(2+) is bound by residues H69, H111, E146, D180, H183, H215, D228, H230, and E260.

The protein belongs to the AP endonuclease 2 family. Zn(2+) serves as cofactor.

The enzyme catalyses Endonucleolytic cleavage to 5'-phosphooligonucleotide end-products.. Functionally, endonuclease IV plays a role in DNA repair. It cleaves phosphodiester bonds at apurinic or apyrimidinic (AP) sites, generating a 3'-hydroxyl group and a 5'-terminal sugar phosphate. The polypeptide is Probable endonuclease 4 (Bacillus cereus (strain B4264)).